Reading from the N-terminus, the 688-residue chain is Glycine--tRNA ligase beta subunit (688 aa).

Belongs to the class-II aminoacyl-tRNA synthetase family. As to quaternary structure, tetramer of two alpha and two beta subunits.

It is found in the cytoplasm. The catalysed reaction is tRNA(Gly) + glycine + ATP = glycyl-tRNA(Gly) + AMP + diphosphate. The sequence is that of Glycine--tRNA ligase beta subunit from Lactobacillus delbrueckii subsp. bulgaricus (strain ATCC BAA-365 / Lb-18).